A 63-amino-acid chain; its full sequence is Small integral membrane protein 43 (63 aa).

Important for interaction with SLC2A1 and SLC2A3 stretches follow at residues 7–29 (LLLYLALFFFLLFLLFLLLFVVI) and 51–57 (HREPWGF). The helical transmembrane segment at 9 to 29 (LYLALFFFLLFLLFLLLFVVI) threads the bilayer.

As to quaternary structure, interacts with glucose transporters SLC2A1/GLUT1 and SLC2A3/GLUT3; the interactions may promote SLC2A1- and SLC2A3-mediated glucose transport to meet the energy needs of mesendoderm differentiation.

The protein resides in the cell membrane. In terms of biological role, required for mesendoderm differentiation. Interacts with glucose transporters and promotes glucose uptake. Probably augments the glucose uptake capacity of glucose transporter proteins to meet the energy needs of mesendoderm differentiation. The chain is Small integral membrane protein 43 from Homo sapiens (Human).